Here is a 544-residue protein sequence, read N- to C-terminus: Membrane protein insertase YidC (544 aa).

The next 5 membrane-spanning stretches (helical) occupy residues Leu13–Leu33, Trp343–Phe363, Leu409–Val429, Leu461–Leu481, and Met506–Ile526.

This sequence belongs to the OXA1/ALB3/YidC family. Type 1 subfamily. In terms of assembly, interacts with the Sec translocase complex via SecD. Specifically interacts with transmembrane segments of nascent integral membrane proteins during membrane integration.

The protein localises to the cell inner membrane. In terms of biological role, required for the insertion and/or proper folding and/or complex formation of integral membrane proteins into the membrane. Involved in integration of membrane proteins that insert both dependently and independently of the Sec translocase complex, as well as at least some lipoproteins. Aids folding of multispanning membrane proteins. In Borreliella burgdorferi (strain ATCC 35210 / DSM 4680 / CIP 102532 / B31) (Borrelia burgdorferi), this protein is Membrane protein insertase YidC.